The following is a 60-amino-acid chain: Mastoparan-VB1 (60 aa).

A signal peptide spans 1–23; the sequence is MKNTILLLFTAFIFLSGFFGMSA. Residues 24–45 constitute a propeptide that is removed on maturation; it reads EALADPKADPLAGPFPDADPDP. 4 AXPX repeats span residues 27–30, 31–34, 35–38, and 40–43; these read ADPK, ADPL, AGPF, and DADP. Leu59 bears the Leucine amide mark.

Expressed by the venom gland.

The protein localises to the secreted. It localises to the target cell membrane. Antimicrobial peptide. Shows activity against both Gram-positive (S.aureus MIC=1.9-3.75 ug/ml) and -negative (E.coli MIC=15-60 ug/ml) bacteria, as well against fungi (C.albicans MIC=15 ug/ml). Also promotes moderate mast cell degranulation. Does not show hemolytic activity on rabbit and human erythrocytes. Its mast cell degranulation activity may be related to the activation of G-protein coupled receptors in mast cells as well as interaction with other proteins located in cell endosomal membranes in the mast cells. This is Mastoparan-VB1 from Vespa bicolor (Black shield wasp).